Reading from the N-terminus, the 861-residue chain is MAEERFDFREAEPRWQRRWDEEGIYKVERDLSRPKYYALAMFPYPSGKLHMGHVRNYTIVDVIARYRRMKGYNVLHPMGFDSFGMPAENAAIQHGANPAVWTRENIAEMTAQLKQMGYSYDWSRAVYTYREDYYRWTQWLFLQFYKKGLAYKKTAPVNWCPSCQTVLANEQVEDGRCWRCDSVVTKKDLAQWFFRITQYADELLEDLKLLEGGWPEQVRIMQQNWIGRSEGARVEFTLEATGDKIPIFTTRPDTIYGVTFMVVAPEHPIVEKICTSGLIPEERVAAIRAFQEKMKHLSEIARTSTEAEKEGLYTGLDVINPFNGEKAQLWIANYVLMDYGTGAVMGVPAHDQRDFEFAQKYGLPVKVVIQNPEGTLRAEEMTAAYVEPGIMVNSGPFDGTPNLEGIPKVIAYAEEQGFGQKTVSYRLRDWLISRQRAWGAPIPIVYCDKCGTVPVPEKDLPVRLPDDLDFTGEGGSPLARHEGFVNTTCPQCGGPARRETDTMDTFVCSSWYFLRYTDPQNAERPWNREDVDYWMPVDQYVGGIEHAVLHLLYARFFTKVLRDMGLVKVDEPFARLLTQGMVLKDGSKMSKSKGNTVSPEEMIAKYGADAVRLFIMFAAPPERDLDWSDAGIEGAARFVNRFYRMVVSALPAYQHARSLLPINPADPASVMGALSEAEIAEGLAKAAPNLTAEDRELRRVIHATVKRITADLHDRFAFNTAISGLMEMTNAIYAYREKQHAEQNTSALVLAEAVQKAVLIIAPFCPHLADELWSRMGHPRSIHLEPWPAYDEEVAKADTVEIVVQINGRVRDRLEVPAGISAAEMEAVAMASEKVQALVAGKQIVKVVPVPGKLVNIVVKG.

A 'HIGH' region motif is present at residues 43-53 (PYPSGKLHMGH). Positions 588–592 (KMSKS) match the 'KMSKS' region motif. ATP is bound at residue Lys-591.

Belongs to the class-I aminoacyl-tRNA synthetase family.

It localises to the cytoplasm. It carries out the reaction tRNA(Leu) + L-leucine + ATP = L-leucyl-tRNA(Leu) + AMP + diphosphate. This is Leucine--tRNA ligase from Symbiobacterium thermophilum (strain DSM 24528 / JCM 14929 / IAM 14863 / T).